The sequence spans 171 residues: Inosine/xanthosine triphosphatase (171 aa).

8–13 (TTNPAK) contacts substrate. Mg(2+) contacts are provided by Glu-38 and Gln-68.

It belongs to the YjjX NTPase family. As to quaternary structure, homodimer. It depends on Mg(2+) as a cofactor. Requires Mn(2+) as cofactor.

It carries out the reaction XTP + H2O = XDP + phosphate + H(+). It catalyses the reaction ITP + H2O = IDP + phosphate + H(+). Functionally, phosphatase that hydrolyzes non-canonical purine nucleotides such as XTP and ITP to their respective diphosphate derivatives. Probably excludes non-canonical purines from DNA/RNA precursor pool, thus preventing their incorporation into DNA/RNA and avoiding chromosomal lesions. This Citrobacter koseri (strain ATCC BAA-895 / CDC 4225-83 / SGSC4696) protein is Inosine/xanthosine triphosphatase.